The sequence spans 1141 residues: Isoleucine--tRNA ligase, cytoplasmic (1141 aa).

Residues 50–60 (PFATGLPHYGH) carry the 'HIGH' region motif. The 'KMSKS' region motif lies at 601 to 605 (KMSKS). An ATP-binding site is contributed by lysine 604.

This sequence belongs to the class-I aminoacyl-tRNA synthetase family.

It localises to the cytoplasm. The enzyme catalyses tRNA(Ile) + L-isoleucine + ATP = L-isoleucyl-tRNA(Ile) + AMP + diphosphate. The sequence is that of Isoleucine--tRNA ligase, cytoplasmic from Caenorhabditis elegans.